Reading from the N-terminus, the 687-residue chain is MERVNDASCGPSGCYTYQVSRHSTEMLHNLNQQRKNGGRFCDVLLRVGDESFPAHRAVLAACSEYFESVFSAQLGDGGAADGGPADVGGAAAAPGGGAGGSRELEMHTISSKVFGDILDFAYTSRIVVRLESFPELMTAAKFLLMRSVIEICQEVIKQSNVQILVPPARADIMLFRPPGTSDLGFPLDMTNGAAMAANSNGIAGSMQPEEEAARATGAAIAGQASLPVLPGVDRLPMVAGPLSPQLLTSPFPNVASSAPPLTSKRGRGRPRKANLLDSMFGSPGGLREAGILPCGLCGKVFTDANRLRQHEAQHGVTSLQLGYIDLPPPRLGENGLPISEDPDGPRKRSRTRKQVACEICGKIFRDVYHLNRHKLSHSGEKPYSCPVCGLRFKRKDRMSYHVRSHDGSVGKPYICQSCGKGFSRPDHLNGHIKQVHTSERPHKCQTCNASFATRDRLRSHLACHEDKVPCQVCGKYLRAAYMADHLKKHSEGPSNFCSICNRGFSSASYLKVHVKTHHGVPLPQVSRHQEPILNGGAAFHCARTYGNKEGQKCSHQDLIESSDSYGDLSDASDLKTPEKQSANGSFSCDVAVPKNKMESDGEKKYPCPECGSFFRSKSYLNKHIQKVHVRALGGPLGDLGPALGSPFSPQQNMSLLESFGFQIVQSAFASSLVDPEVDQQPMGPEGK.

In terms of domain architecture, BTB spans 41-130 (CDVLLRVGDE…AYTSRIVVRL (90 aa)). Over residues 250–260 (PFPNVASSAPP) the composition is skewed to polar residues. Residues 250–279 (PFPNVASSAPPLTSKRGRGRPRKANLLDSM) are disordered. The C2H2-type 1 zinc-finger motif lies at 292–314 (LPCGLCGKVFTDANRLRQHEAQH). The disordered stretch occupies residues 332–351 (GENGLPISEDPDGPRKRSRT). 5 C2H2-type zinc fingers span residues 355 to 377 (VACE…KLSH), 383 to 405 (YSCP…VRSH), 413 to 436 (YICQ…KQVH), 442 to 464 (HKCQ…LACH), and 495 to 517 (NFCS…VKTH). Residues 564 to 587 (SYGDLSDASDLKTPEKQSANGSFS) form a disordered region. The segment at 605–628 (YPCPECGSFFRSKSYLNKHIQKVH) adopts a C2H2-type 7 zinc-finger fold.

As to quaternary structure, homodimer. Interacts with RNF4. Interacts (via C-terminus) with TP53; this interaction inhibits TP53 ability to activate transcription. Widely expressed at high levels during embryogenesis, especially in the central nervous system, especially to the actively proliferating neuroblasts in the periventricular neocortical neuroepithelium, in the telencephalic cortical plate and in the hippocampus. Also expressed in a stage-specific manner in the mouse germinal epithelium. While strongly expressed during brain development,m its expression turns down in adult brain.

The protein localises to the nucleus. Functionally, transcriptional regulator that plays a role in many biological processes such as embryogenesis, senescence, T-cell development or neurogenesis. Interacts with the TP53 protein to control genes that are important in proliferation and in the DNA-damage response. Mechanistically, the interaction inhibits the DNA binding and transcriptional activity of TP53/p53. Part of the transcriptional network modulating regulatory T-cell development and controls the generation of the regulatory T-cell pool under homeostatic conditions. This chain is POZ (BTB) and AT hook-containing zinc finger 1, found in Mus musculus (Mouse).